A 630-amino-acid chain; its full sequence is 1-deoxy-D-xylulose-5-phosphate synthase (630 aa).

Thiamine diphosphate contacts are provided by residues H72 and 113–115 (GHS). D144 is a binding site for Mg(2+). Residues 145-146 (GA), N173, Y284, and E367 contribute to the thiamine diphosphate site. N173 serves as a coordination point for Mg(2+).

Belongs to the transketolase family. DXPS subfamily. As to quaternary structure, homodimer. Mg(2+) serves as cofactor. The cofactor is thiamine diphosphate.

It carries out the reaction D-glyceraldehyde 3-phosphate + pyruvate + H(+) = 1-deoxy-D-xylulose 5-phosphate + CO2. Its pathway is metabolic intermediate biosynthesis; 1-deoxy-D-xylulose 5-phosphate biosynthesis; 1-deoxy-D-xylulose 5-phosphate from D-glyceraldehyde 3-phosphate and pyruvate: step 1/1. In terms of biological role, catalyzes the acyloin condensation reaction between C atoms 2 and 3 of pyruvate and glyceraldehyde 3-phosphate to yield 1-deoxy-D-xylulose-5-phosphate (DXP). This Geobacillus thermodenitrificans (strain NG80-2) protein is 1-deoxy-D-xylulose-5-phosphate synthase.